The chain runs to 443 residues: Ribulose bisphosphate carboxylase large chain (443 aa).

Positions 89 and 139 each coordinate substrate. K141 serves as the catalytic Proton acceptor. Position 143 (K143) interacts with substrate. K167, D169, and E170 together coordinate Mg(2+). K167 carries the N6-carboxylysine modification. Residue H260 is the Proton acceptor of the active site. R261, H293, and S345 together coordinate substrate.

This sequence belongs to the RuBisCO large chain family. Type I subfamily. Heterohexadecamer of 8 large chains and 8 small chains; disulfide-linked. The disulfide link is formed within the large subunit homodimers. It depends on Mg(2+) as a cofactor. The disulfide bond which can form in the large chain dimeric partners within the hexadecamer appears to be associated with oxidative stress and protein turnover.

It is found in the plastid. The protein resides in the chloroplast. It carries out the reaction 2 (2R)-3-phosphoglycerate + 2 H(+) = D-ribulose 1,5-bisphosphate + CO2 + H2O. The catalysed reaction is D-ribulose 1,5-bisphosphate + O2 = 2-phosphoglycolate + (2R)-3-phosphoglycerate + 2 H(+). Functionally, ruBisCO catalyzes two reactions: the carboxylation of D-ribulose 1,5-bisphosphate, the primary event in carbon dioxide fixation, as well as the oxidative fragmentation of the pentose substrate in the photorespiration process. Both reactions occur simultaneously and in competition at the same active site. The chain is Ribulose bisphosphate carboxylase large chain from Villarsia calthifolia (Marsh flower).